An 89-amino-acid chain; its full sequence is MAHKKAGGSSRNGRDSESKRLGVKKFGGEAVLAGNIIVRQRGTKWHPGANVGLGKDHTIFATVNGSVSFRTKANGRTYVSVNPIAEAAE.

Positions 1–22 (MAHKKAGGSSRNGRDSESKRLG) are disordered.

The protein belongs to the bacterial ribosomal protein bL27 family.

This Brucella abortus (strain S19) protein is Large ribosomal subunit protein bL27.